The primary structure comprises 316 residues: MTNEFHHVTVLLHEAVDMLDIKPDGIYVDATLGGSGHSAYLLSLLGDKGHLYCFDQDQKAIDHAQEQLKPYIDKGQVTFIKDNFRHLKARLLEHGVTEIDGILYDLGVSSPQLDERERGFSYKQDAPLDMRMDSQAALTAYEVVNTYDFNDLVRIFFKYGEDKFSKQIARKIEQARAIKPISTTTELAALIKSAKPAKELKKKGHPAKQIFQAIRIEVNDELGAADASIQRAIELLALDGRISVITFHSLEDRLTKHLFKEASTADAPKGLPFIPDELKPKLELVSRKPILPSQKELMANNRAHSAKLRVARKVRK.

S-adenosyl-L-methionine-binding positions include 35 to 37 (SGH), Asp-55, Phe-84, Asp-105, and Gln-112.

This sequence belongs to the methyltransferase superfamily. RsmH family.

The protein localises to the cytoplasm. It catalyses the reaction cytidine(1402) in 16S rRNA + S-adenosyl-L-methionine = N(4)-methylcytidine(1402) in 16S rRNA + S-adenosyl-L-homocysteine + H(+). Functionally, specifically methylates the N4 position of cytidine in position 1402 (C1402) of 16S rRNA. This chain is Ribosomal RNA small subunit methyltransferase H, found in Streptococcus equi subsp. equi (strain 4047).